Consider the following 430-residue polypeptide: N-lysine methyltransferase SMYD2-B (430 aa).

The SET domain occupies 5–239 (EGLERFDSPG…AGEEVFTSYI (235 aa)). An S-adenosyl-L-methionine-binding site is contributed by 15 to 17 (KGR). 8 residues coordinate Zn(2+): C50, C53, C63, C66, C72, C76, H84, and C88. Residues 50–88 (CDFCFTRKEGLSKCGKCKQAFYCNVDCQKGDWPMHKLEC) form an MYND-type zinc finger. Residues H135, 204–205 (NH), and 256–258 (YFF) contribute to the S-adenosyl-L-methionine site.

It belongs to the class V-like SAM-binding methyltransferase superfamily.

It localises to the cytoplasm. Its subcellular location is the cytosol. The protein localises to the nucleus. The enzyme catalyses L-lysyl(4)-[histone H3] + 3 S-adenosyl-L-methionine = N(6),N(6),N(6)-trimethyl-L-lysyl(4)-[histone H3] + 3 S-adenosyl-L-homocysteine + 3 H(+). It carries out the reaction L-lysyl-[protein] + S-adenosyl-L-methionine = N(6)-methyl-L-lysyl-[protein] + S-adenosyl-L-homocysteine + H(+). In terms of biological role, protein-lysine N-methyltransferase that methylates both histones and non-histone proteins, including p53/TP53 and RB1. Specifically trimethylates histone H3 'Lys-4' (H3K4me3) in vivo. The activity requires interaction with HSP90alpha. Shows even higher methyltransferase activity on p53/TP53. Monomethylates 'Lys-370' of p53/TP53, leading to decreased DNA-binding activity and subsequent transcriptional regulation activity of p53/TP53. Monomethylates RB1 at 'Lys-860'. The polypeptide is N-lysine methyltransferase SMYD2-B (smyd2-b) (Xenopus laevis (African clawed frog)).